We begin with the raw amino-acid sequence, 688 residues long: Glycine--tRNA ligase beta subunit (688 aa).

Belongs to the class-II aminoacyl-tRNA synthetase family. As to quaternary structure, tetramer of two alpha and two beta subunits.

It localises to the cytoplasm. It catalyses the reaction tRNA(Gly) + glycine + ATP = glycyl-tRNA(Gly) + AMP + diphosphate. This is Glycine--tRNA ligase beta subunit from Vibrio atlanticus (strain LGP32) (Vibrio splendidus (strain Mel32)).